Reading from the N-terminus, the 173-residue chain is Ribosome maturation factor RimM (173 aa).

One can recognise a PRC barrel domain in the interval Glu102–Phe173.

It belongs to the RimM family. As to quaternary structure, binds ribosomal protein uS19.

Its subcellular location is the cytoplasm. In terms of biological role, an accessory protein needed during the final step in the assembly of 30S ribosomal subunit, possibly for assembly of the head region. Essential for efficient processing of 16S rRNA. May be needed both before and after RbfA during the maturation of 16S rRNA. It has affinity for free ribosomal 30S subunits but not for 70S ribosomes. This chain is Ribosome maturation factor RimM, found in Methylobacillus flagellatus (strain ATCC 51484 / DSM 6875 / VKM B-1610 / KT).